Reading from the N-terminus, the 540-residue chain is CTP synthase (540 aa).

The interval 1–267 (MTKYIFVTGG…DQKVCDFLHL (267 aa)) is amidoligase domain. A CTP-binding site is contributed by Ser13. Residue Ser13 coordinates UTP. 14-19 (SLGKGI) is an ATP binding site. Tyr54 provides a ligand contact to L-glutamine. Asp71 contributes to the ATP binding site. Residues Asp71 and Glu141 each contribute to the Mg(2+) site. CTP contacts are provided by residues 148-150 (DIE), 188-193 (KTKPTQ), and Lys224. Residues 188-193 (KTKPTQ) and Lys224 each bind UTP. Residues 294-537 (TITLVGKYVE…IGAASGLPAQ (244 aa)) form the Glutamine amidotransferase type-1 domain. Gly356 lines the L-glutamine pocket. The active-site Nucleophile; for glutamine hydrolysis is Cys383. Residues 384 to 387 (LGMQ), Glu407, and Arg465 contribute to the L-glutamine site. Active-site residues include His510 and Glu512.

Belongs to the CTP synthase family. In terms of assembly, homotetramer.

The enzyme catalyses UTP + L-glutamine + ATP + H2O = CTP + L-glutamate + ADP + phosphate + 2 H(+). It catalyses the reaction L-glutamine + H2O = L-glutamate + NH4(+). It carries out the reaction UTP + NH4(+) + ATP = CTP + ADP + phosphate + 2 H(+). It functions in the pathway pyrimidine metabolism; CTP biosynthesis via de novo pathway; CTP from UDP: step 2/2. Allosterically activated by GTP, when glutamine is the substrate; GTP has no effect on the reaction when ammonia is the substrate. The allosteric effector GTP functions by stabilizing the protein conformation that binds the tetrahedral intermediate(s) formed during glutamine hydrolysis. Inhibited by the product CTP, via allosteric rather than competitive inhibition. In terms of biological role, catalyzes the ATP-dependent amination of UTP to CTP with either L-glutamine or ammonia as the source of nitrogen. Regulates intracellular CTP levels through interactions with the four ribonucleotide triphosphates. The sequence is that of CTP synthase from Lactobacillus johnsonii (strain CNCM I-12250 / La1 / NCC 533).